Here is a 529-residue protein sequence, read N- to C-terminus: Auxin response factor 13 (529 aa).

The tract at residues 1–22 is disordered; sequence MARPPAATAPPPPPPPPPPPPP. Residues 7–22 are compositionally biased toward pro residues; it reads ATAPPPPPPPPPPPPP. The segment at residues 128–234 is a DNA-binding region (TF-B3); that stretch reads YAKQLTQSDA…KLLVGVRRAA (107 aa). Disordered stretches follow at residues 443 to 462 and 497 to 529; these read IVTP…PLSA and PEGV…GARL. Over residues 444–461 the composition is skewed to polar residues; it reads VTPQNGSPPDNPVNTPLS. A compositionally biased stretch (acidic residues) spans 499–510; that stretch reads GVDDETATEEAS. Residues 511-523 show a composition bias toward polar residues; that stretch reads DTSLPDSLTNGHN.

This sequence belongs to the ARF family. As to quaternary structure, homo and heterodimers. In terms of tissue distribution, expressed in roots, culms, leaves and young panicles.

The protein localises to the nucleus. Its function is as follows. Auxin response factors (ARFs) are transcriptional factors that bind specifically to the DNA sequence 5'-TGTCTC-3' found in the auxin-responsive promoter elements (AuxREs). In Oryza sativa subsp. japonica (Rice), this protein is Auxin response factor 13 (ARF13).